We begin with the raw amino-acid sequence, 420 residues long: Gamma-glutamyl phosphate reductase (420 aa).

The protein belongs to the gamma-glutamyl phosphate reductase family.

The protein resides in the cytoplasm. It carries out the reaction L-glutamate 5-semialdehyde + phosphate + NADP(+) = L-glutamyl 5-phosphate + NADPH + H(+). The protein operates within amino-acid biosynthesis; L-proline biosynthesis; L-glutamate 5-semialdehyde from L-glutamate: step 2/2. Functionally, catalyzes the NADPH-dependent reduction of L-glutamate 5-phosphate into L-glutamate 5-semialdehyde and phosphate. The product spontaneously undergoes cyclization to form 1-pyrroline-5-carboxylate. This Shewanella amazonensis (strain ATCC BAA-1098 / SB2B) protein is Gamma-glutamyl phosphate reductase.